We begin with the raw amino-acid sequence, 431 residues long: Tyrosine--tRNA ligase (431 aa).

Residue tyrosine 34 participates in L-tyrosine binding. The 'HIGH' region motif lies at 39–48 (PTADSLHIGH). Residues tyrosine 171 and glutamine 175 each coordinate L-tyrosine. The short motif at 231–235 (KFGKT) is the 'KMSKS' region element. ATP is bound at residue lysine 234. Residues 353-422 (INVVEALVKT…GKYTILRRGK (70 aa)) form the S4 RNA-binding domain.

This sequence belongs to the class-I aminoacyl-tRNA synthetase family. TyrS type 1 subfamily. As to quaternary structure, homodimer.

The protein localises to the cytoplasm. The enzyme catalyses tRNA(Tyr) + L-tyrosine + ATP = L-tyrosyl-tRNA(Tyr) + AMP + diphosphate + H(+). Catalyzes the attachment of tyrosine to tRNA(Tyr) in a two-step reaction: tyrosine is first activated by ATP to form Tyr-AMP and then transferred to the acceptor end of tRNA(Tyr). This Neisseria meningitidis serogroup C (strain 053442) protein is Tyrosine--tRNA ligase.